The sequence spans 87 residues: U3-theraphotoxin-Hhn1o (87 aa).

Positions 1 to 24 are cleaved as a signal peptide; the sequence is MVNMKASMFLTFAGLVLLFVVCYA. Residues 25–52 constitute a propeptide that is removed on maturation; the sequence is SESEEKEFPKEMLSSIFAVDNDFKQEER. 2 disulfide bridges follow: Cys-54–Cys-67 and Cys-61–Cys-72.

The protein belongs to the neurotoxin 10 (Hwtx-1) family. 51 (Hntx-8) subfamily. Hntx-8 sub-subfamily. In terms of tissue distribution, expressed by the venom gland.

It localises to the secreted. Its function is as follows. Ion channel inhibitor. In Cyriopagopus hainanus (Chinese bird spider), this protein is U3-theraphotoxin-Hhn1o.